The chain runs to 218 residues: Probable GTP-binding protein EngB (218 aa).

The region spanning 31-205 (VGVEIAFAGR…LGILNEWCHP (175 aa)) is the EngB-type G domain. GTP is bound by residues 39 to 46 (GRSNAGKS), 66 to 70 (GRTQL), 84 to 87 (DLPG), 151 to 154 (TKCD), and 184 to 186 (FSS). Positions 46 and 68 each coordinate Mg(2+).

Belongs to the TRAFAC class TrmE-Era-EngA-EngB-Septin-like GTPase superfamily. EngB GTPase family. Mg(2+) serves as cofactor.

In terms of biological role, necessary for normal cell division and for the maintenance of normal septation. This is Probable GTP-binding protein EngB from Shewanella loihica (strain ATCC BAA-1088 / PV-4).